A 190-amino-acid polypeptide reads, in one-letter code: Orotate phosphoribosyltransferase (190 aa).

5-phospho-alpha-D-ribose 1-diphosphate contacts are provided by residues Arg101, Lys102, Lys105, His107, and 128–136; that span reads EDVVTTGGS. Orotate-binding residues include Thr132 and Arg160.

This sequence belongs to the purine/pyrimidine phosphoribosyltransferase family. PyrE subfamily. As to quaternary structure, homodimer. Requires Mg(2+) as cofactor.

The enzyme catalyses orotidine 5'-phosphate + diphosphate = orotate + 5-phospho-alpha-D-ribose 1-diphosphate. Its pathway is pyrimidine metabolism; UMP biosynthesis via de novo pathway; UMP from orotate: step 1/2. Its function is as follows. Catalyzes the transfer of a ribosyl phosphate group from 5-phosphoribose 1-diphosphate to orotate, leading to the formation of orotidine monophosphate (OMP). The polypeptide is Orotate phosphoribosyltransferase (Synechococcus sp. (strain CC9605)).